Here is a 359-residue protein sequence, read N- to C-terminus: Peptide chain release factor 1 (359 aa).

An N5-methylglutamine modification is found at Q236.

The protein belongs to the prokaryotic/mitochondrial release factor family. Methylated by PrmC. Methylation increases the termination efficiency of RF1.

Its subcellular location is the cytoplasm. Its function is as follows. Peptide chain release factor 1 directs the termination of translation in response to the peptide chain termination codons UAG and UAA. The protein is Peptide chain release factor 1 of Streptococcus pyogenes serotype M1.